The chain runs to 1363 residues: Insulin-like peptide receptor (1363 aa).

The N-terminal stretch at 1–29 (MRVVDKMAGLMWAALTLVIGLGLLVPSNG) is a signal peptide. 16 N-linked (GlcNAc...) asparagine glycosylation sites follow: asparagine 51, asparagine 97, asparagine 137, asparagine 278, asparagine 483, asparagine 599, asparagine 617, asparagine 665, asparagine 666, asparagine 711, asparagine 732, asparagine 736, asparagine 743, asparagine 816, asparagine 885, and asparagine 898. 2 consecutive Fibronectin type-III domains span residues 473 to 586 (SFSR…TDAD) and 590 to 680 (HPQD…CPKS). Fibronectin type-III domains follow at residues 712-804 (ETRA…LART) and 813-912 (IPGN…VEEE). Over 721–928 (ELPVTARPFY…QDPQQQVPVS (208 aa)) the chain is Extracellular. The tract at residues 739–759 (LPSTNRTVPPTPTPNPNPQLE) is disordered. The helical transmembrane segment at 929-949 (LMIGMGVGFSLLLILAVIFGI) threads the bilayer. At 950 to 1363 (WYCTKKRFGD…NLRIPKSTLC (414 aa)) the chain is on the cytoplasmic side. The Protein kinase domain maps to 994 to 1283 (ITLIRELGQG…EIVEILSPEL (290 aa)). Residues 1000-1008 (LGQGSFGMV) and lysine 1028 each bind ATP. Residues 1091 to 1117 (PEEDVGLSDSPASNEAKNSPFAENDND) are disordered. Aspartate 1148 acts as the Proton acceptor in catalysis. Tyrosine 1174 carries the phosphotyrosine; by autocatalysis modification. The segment at 1316–1363 (DTETEMYPSGSEFSSTPSPPSETPYSHMNGSHPQNGSMNLRIPKSTLC) is disordered. Residues 1322-1331 (YPSGSEFSST) are compositionally biased toward low complexity. The segment covering 1343–1353 (MNGSHPQNGSM) has biased composition (polar residues).

Belongs to the protein kinase superfamily. Tyr protein kinase family. Insulin receptor subfamily. In terms of assembly, probable tetramer of 2 alpha and 2 beta chains linked by disulfide bonds. The alpha chains contribute to the formation of the ligand-binding domain, while the beta chains carry the kinase domain. The cofactor is Mn(2+).

The protein localises to the membrane. The enzyme catalyses L-tyrosyl-[protein] + ATP = O-phospho-L-tyrosyl-[protein] + ADP + H(+). In terms of biological role, this receptor binds to the insulin related peptide and has a tyrosine-protein kinase activity. This chain is Insulin-like peptide receptor, found in Branchiostoma lanceolatum (Common lancelet).